Reading from the N-terminus, the 286-residue chain is Transcription initiation factor IIA large subunit (286 aa).

3 disordered regions span residues 120–145 (NTVE…ADVT), 167–195 (TVEN…KEKE), and 208–236 (KRSA…EGEE). Residues 175–195 (SEKKDDEEKEEDVEKTRKEKE) show a composition bias toward basic and acidic residues. Positions 214 to 236 (DTDEVGSELDDSDDDYLISEGEE) are enriched in acidic residues.

It belongs to the TFIIA subunit 1 family. As to quaternary structure, TFIIA is a heterodimer composed of the large TOA1 and a small TOA2 subunits. Interacts with KAP122.

It localises to the cytoplasm. Its subcellular location is the nucleus. Its function is as follows. TFIIA is a component of the transcription machinery of RNA polymerase II and implicated in the regulation of basal transcription. Interacts with TBP (the TATA-binding protein). The sequence is that of Transcription initiation factor IIA large subunit (TOA1) from Saccharomyces cerevisiae (strain ATCC 204508 / S288c) (Baker's yeast).